The following is a 437-amino-acid chain: Adenylosuccinate lyase (437 aa).

Residues 4–5 (RY), 70–72 (KHD), and 96–97 (TS) each bind N(6)-(1,2-dicarboxyethyl)-AMP. The active-site Proton donor/acceptor is His-144. N(6)-(1,2-dicarboxyethyl)-AMP is bound at residue Gln-215. The active-site Proton donor/acceptor is Ser-265. Residues Ser-266, 271-273 (KKN), and 310-314 (SVERV) each bind N(6)-(1,2-dicarboxyethyl)-AMP.

This sequence belongs to the lyase 1 family. Adenylosuccinate lyase subfamily. Homooligomer. Residues from neighboring subunits contribute catalytic and substrate-binding residues to each active site.

It carries out the reaction N(6)-(1,2-dicarboxyethyl)-AMP = fumarate + AMP. The enzyme catalyses (2S)-2-[5-amino-1-(5-phospho-beta-D-ribosyl)imidazole-4-carboxamido]succinate = 5-amino-1-(5-phospho-beta-D-ribosyl)imidazole-4-carboxamide + fumarate. Its pathway is purine metabolism; AMP biosynthesis via de novo pathway; AMP from IMP: step 2/2. It participates in purine metabolism; IMP biosynthesis via de novo pathway; 5-amino-1-(5-phospho-D-ribosyl)imidazole-4-carboxamide from 5-amino-1-(5-phospho-D-ribosyl)imidazole-4-carboxylate: step 2/2. Catalyzes two reactions in de novo purine nucleotide biosynthesis. Catalyzes the breakdown of 5-aminoimidazole- (N-succinylocarboxamide) ribotide (SAICAR or 2-[5-amino-1-(5-phospho-beta-D-ribosyl)imidazole-4-carboxamido]succinate) to 5-aminoimidazole-4-carboxamide ribotide (AICAR or 5-amino-1-(5-phospho-beta-D-ribosyl)imidazole-4-carboxamide) and fumarate, and of adenylosuccinate (ADS or N(6)-(1,2-dicarboxyethyl)-AMP) to adenosine monophosphate (AMP) and fumarate. The protein is Adenylosuccinate lyase (purB) of Aquifex aeolicus (strain VF5).